The sequence spans 1203 residues: Rho GTPase-activating protein gacGG (1203 aa).

RCC1 repeat units follow at residues 52–104 (TGEL…AIME), 106–148 (GLLY…VVAD), 155–204 (KRSV…AIVE), 206–255 (NEVF…ARSG), 257–298 (GNVC…VLSE), 299–359 (KGEI…EGRN), and 361–410 (LSVY…YLRG). A disordered region spans residues 316 to 343 (KLDVNSSPNINSSSGTTTPTTNTTTTTK). Low complexity predominate over residues 320-343 (NSSPNINSSSGTTTPTTNTTTTTK). The Rho-GAP domain maps to 381-594 (VDIAESMRRK…TIMKQYPLME (214 aa)). A coiled-coil region spans residues 649–679 (TLEIKNNQNNQNNQKENNNNNNNINNSNNNN). Disordered stretches follow at residues 657-725 (NNQN…TGNI), 746-789 (KDGN…NLSP), and 831-852 (FANS…LIGS). Low complexity-rich tracts occupy residues 746 to 788 (KDGN…PNLS) and 833 to 852 (NSGS…LIGS). A coiled-coil region spans residues 995-1078 (FDLLEKSMTE…ISNQNLSRVN (84 aa)).

Its subcellular location is the cytoplasm. Functionally, rho GTPase-activating protein involved in the signal transduction pathway. This is Rho GTPase-activating protein gacGG (gacGG) from Dictyostelium discoideum (Social amoeba).